Here is a 448-residue protein sequence, read N- to C-terminus: Phosphoglucosamine mutase (448 aa).

Ser-102 (phosphoserine intermediate) is an active-site residue. Positions 102, 242, 244, and 246 each coordinate Mg(2+). Residue Ser-102 is modified to Phosphoserine.

Belongs to the phosphohexose mutase family. Requires Mg(2+) as cofactor. Activated by phosphorylation.

The catalysed reaction is alpha-D-glucosamine 1-phosphate = D-glucosamine 6-phosphate. Functionally, catalyzes the conversion of glucosamine-6-phosphate to glucosamine-1-phosphate. This chain is Phosphoglucosamine mutase, found in Brevibacillus brevis (strain 47 / JCM 6285 / NBRC 100599).